The following is a 196-amino-acid chain: MLERIKVCFTESIQTQIAAAEALPDAISRAAMTLVQSLLNGNKILCCGNGTSGANAQHFAASMINRYETERPGLPAIALNTDNVVLTAITNDRLHDEVYAKQVRALGHAGDVLLAISTRGNSRDIVKAVEAAVTRDMTIVALTGYDGGELAGLLGPQDVEIRIPSHRSARIHEMHMLTVNCLCDLIDNTLFPHQDD.

The region spanning 34–196 (LVQSLLNGNK…DNTLFPHQDD (163 aa)) is the SIS domain.

Belongs to the SIS family. DiaA subfamily. Homotetramer; dimer of dimers.

Required for the timely initiation of chromosomal replication via direct interactions with the DnaA initiator protein. In Cronobacter sakazakii (strain ATCC BAA-894) (Enterobacter sakazakii), this protein is DnaA initiator-associating protein DiaA.